Consider the following 328-residue polypeptide: Transcription initiation factor TFIID subunit 8 (328 aa).

The 68-residue stretch at 16-83 (RRILNKVVSQ…DVSLALINMG (68 aa)) folds into the Histone-fold domain. Residues 229 to 309 (NRTEDEPSKD…PGTMPSRSLA (81 aa)) form a disordered region. Phosphoserine occurs at positions 236, 245, and 255. Over residues 239–251 (DGEEGDSENEEMD) the composition is skewed to acidic residues. A compositionally biased stretch (basic and acidic residues) spans 252–264 (GDKSKEEKPELDI). Positions 296 to 309 (NCPTPGTMPSRSLA) are enriched in polar residues.

The protein belongs to the TAF8 family. As to quaternary structure, belongs to the TFIID complex which is composed of TATA binding protein (Tbp) and a number of TBP-associated factors (TAFs). Histone fold interacts with N-terminus of Taf10b.

Its subcellular location is the nucleus. TFIID is a multimeric protein complex that plays a central role in mediating promoter responses to various activators and repressors. The chain is Transcription initiation factor TFIID subunit 8 from Drosophila melanogaster (Fruit fly).